The primary structure comprises 688 residues: Glycine--tRNA ligase beta subunit (688 aa).

The protein belongs to the class-II aminoacyl-tRNA synthetase family. Tetramer of two alpha and two beta subunits.

The protein localises to the cytoplasm. It carries out the reaction tRNA(Gly) + glycine + ATP = glycyl-tRNA(Gly) + AMP + diphosphate. This chain is Glycine--tRNA ligase beta subunit, found in Haemophilus influenzae (strain PittGG).